The chain runs to 139 residues: HTH-type transcriptional repressor Mb2911 (139 aa).

The HTH marR-type domain maps to 6-138; the sequence is DAPLGYLLYR…FKRMLEKLGS (133 aa).

Homodimer.

Represses expression of the HQNO methyltransferase htm gene by binding to its promoter region. In Mycobacterium bovis (strain ATCC BAA-935 / AF2122/97), this protein is HTH-type transcriptional repressor Mb2911.